A 467-amino-acid chain; its full sequence is Glutamate--tRNA ligase 1 (467 aa).

The short motif at 8–18 (PSPTGHLHVGG) is the 'HIGH' region element. Positions 230 to 234 (PLSKR) match the 'KMSKS' region motif. ATP is bound at residue Lys-233.

The protein belongs to the class-I aminoacyl-tRNA synthetase family. Glutamate--tRNA ligase type 1 subfamily. As to quaternary structure, monomer.

Its subcellular location is the cytoplasm. The catalysed reaction is tRNA(Glu) + L-glutamate + ATP = L-glutamyl-tRNA(Glu) + AMP + diphosphate. In terms of biological role, catalyzes the attachment of glutamate to tRNA(Glu) in a two-step reaction: glutamate is first activated by ATP to form Glu-AMP and then transferred to the acceptor end of tRNA(Glu). The polypeptide is Glutamate--tRNA ligase 1 (Petrotoga mobilis (strain DSM 10674 / SJ95)).